The sequence spans 251 residues: MRTPLIAGNWKLFKTLADATALIDELVPLVSDVKDVEIVVAPVFTAINTVAKAAGKTGVKVAAQDCYWEDEGAFTGEVSPKLLKDAGCSHVIIGHSERRQYFGETDGTVNLKTKAAIRAGLTVLLCVGESLAQRESNDTFKVIETQVRGGLADIPAAELTQIVVAYEPVWAIGTGKTASDAQAQEVHAFIRTLVAQIYGPSEADAMRILYGGSVKPENIKGLMSQPDIDGALVGGASLKAESFAGIVRFKG.

Substrate is bound at residue 9 to 11 (NWK). H95 acts as the Electrophile in catalysis. The active-site Proton acceptor is the E167. Substrate-binding positions include G173, S213, and 234 to 235 (GG).

Belongs to the triosephosphate isomerase family. Homodimer.

It is found in the cytoplasm. It catalyses the reaction D-glyceraldehyde 3-phosphate = dihydroxyacetone phosphate. The protein operates within carbohydrate biosynthesis; gluconeogenesis. It participates in carbohydrate degradation; glycolysis; D-glyceraldehyde 3-phosphate from glycerone phosphate: step 1/1. Involved in the gluconeogenesis. Catalyzes stereospecifically the conversion of dihydroxyacetone phosphate (DHAP) to D-glyceraldehyde-3-phosphate (G3P). This is Triosephosphate isomerase from Trichlorobacter lovleyi (strain ATCC BAA-1151 / DSM 17278 / SZ) (Geobacter lovleyi).